The following is a 208-amino-acid chain: Small ribosomal subunit protein uS4 (208 aa).

The region spanning Gln-98–Ile-161 is the S4 RNA-binding domain.

The protein belongs to the universal ribosomal protein uS4 family. Part of the 30S ribosomal subunit. Contacts protein S5. The interaction surface between S4 and S5 is involved in control of translational fidelity.

One of the primary rRNA binding proteins, it binds directly to 16S rRNA where it nucleates assembly of the body of the 30S subunit. Its function is as follows. With S5 and S12 plays an important role in translational accuracy. This chain is Small ribosomal subunit protein uS4, found in Sulfurovum sp. (strain NBC37-1).